Consider the following 867-residue polypeptide: Probable beta-glucosidase A (867 aa).

Residues 1-18 form the signal peptide; sequence MRFSWLEVAVTAASLANA. N-linked (GlcNAc...) asparagine glycans are attached at residues N67, N218, and N259. Residue D287 is part of the active site. Residues N322, N329, N361, N449, N530, N549, N571, N675, and N719 are each glycosylated (N-linked (GlcNAc...) asparagine).

Belongs to the glycosyl hydrolase 3 family.

Its subcellular location is the secreted. The catalysed reaction is Hydrolysis of terminal, non-reducing beta-D-glucosyl residues with release of beta-D-glucose.. It functions in the pathway glycan metabolism; cellulose degradation. Its function is as follows. Beta-glucosidases are one of a number of cellulolytic enzymes involved in the degradation of cellulosic biomass. Catalyzes the last step releasing glucose from the inhibitory cellobiose. The polypeptide is Probable beta-glucosidase A (bglA) (Aspergillus clavatus (strain ATCC 1007 / CBS 513.65 / DSM 816 / NCTC 3887 / NRRL 1 / QM 1276 / 107)).